The primary structure comprises 201 residues: Small ribosomal subunit protein uS4c (201 aa).

The 62-residue stretch at Met-89 to Asn-150 folds into the S4 RNA-binding domain.

The protein belongs to the universal ribosomal protein uS4 family. Part of the 30S ribosomal subunit. Contacts protein S5. The interaction surface between S4 and S5 is involved in control of translational fidelity.

It is found in the plastid. It localises to the chloroplast. In terms of biological role, one of the primary rRNA binding proteins, it binds directly to 16S rRNA where it nucleates assembly of the body of the 30S subunit. Its function is as follows. With S5 and S12 plays an important role in translational accuracy. This chain is Small ribosomal subunit protein uS4c (rps4), found in Phalaenopsis aphrodite subsp. formosana (Moth orchid).